Reading from the N-terminus, the 414-residue chain is Putative competence-damage inducible protein (414 aa).

This sequence belongs to the CinA family.

This chain is Putative competence-damage inducible protein, found in Moorella thermoacetica (strain ATCC 39073 / JCM 9320).